Here is a 239-residue protein sequence, read N- to C-terminus: Protein G1-like8 (239 aa).

2 disordered regions span residues M1–S35 and K149–V239. Positions D9 to Q29 are enriched in low complexity. An ALOG domain is found at R32–K159. The short motif at K157–K161 is the Nuclear localization signal element. Residues Q167–H178 are compositionally biased toward pro residues. Composition is skewed to low complexity over residues Q179 to Q215 and T223 to V239.

It belongs to the plant homeotic and developmental regulators ALOG protein family.

Its subcellular location is the nucleus. Functionally, probable transcription regulator that acts as a developmental regulator by promoting cell growth in response to light. This is Protein G1-like8 from Oryza sativa subsp. indica (Rice).